A 267-amino-acid chain; its full sequence is Phosphatidylglycerol--prolipoprotein diacylglyceryl transferase (267 aa).

7 consecutive transmembrane segments (helical) span residues 17–37, 56–76, 91–111, 120–140, 173–193, 199–219, and 236–256; these read LNIR…WLLA, LVTY…TLFY, IWNG…AIWL, LFEV…AGRL, QLYE…LFSA, MAVS…VEFF, and MGQI…GFAM. A 1,2-diacyl-sn-glycero-3-phospho-(1'-sn-glycerol) is bound at residue Arg-139.

This sequence belongs to the Lgt family.

Its subcellular location is the cell inner membrane. It catalyses the reaction L-cysteinyl-[prolipoprotein] + a 1,2-diacyl-sn-glycero-3-phospho-(1'-sn-glycerol) = an S-1,2-diacyl-sn-glyceryl-L-cysteinyl-[prolipoprotein] + sn-glycerol 1-phosphate + H(+). It participates in protein modification; lipoprotein biosynthesis (diacylglyceryl transfer). Its function is as follows. Catalyzes the transfer of the diacylglyceryl group from phosphatidylglycerol to the sulfhydryl group of the N-terminal cysteine of a prolipoprotein, the first step in the formation of mature lipoproteins. The sequence is that of Phosphatidylglycerol--prolipoprotein diacylglyceryl transferase from Oleidesulfovibrio alaskensis (strain ATCC BAA-1058 / DSM 17464 / G20) (Desulfovibrio alaskensis).